Consider the following 160-residue polypeptide: Globin CTT-Y (160 aa).

Positions 1–16 (MKVLAIFALCIIGALA) are cleaved as a signal peptide. In terms of domain architecture, Globin spans 17 to 160 (TPCDDFKIMQ…IRKVINANLE (144 aa)). Heme b-binding residues include His74 and His109.

Belongs to the globin family.

In Chironomus thummi piger (Midge), this protein is Globin CTT-Y (CTT-Y).